The sequence spans 213 residues: Pyrrolidone-carboxylate peptidase (213 aa).

Catalysis depends on residues glutamate 78, cysteine 141, and histidine 165.

Belongs to the peptidase C15 family. Homotetramer.

The protein resides in the cytoplasm. It catalyses the reaction Release of an N-terminal pyroglutamyl group from a polypeptide, the second amino acid generally not being Pro.. Its function is as follows. Removes 5-oxoproline from various penultimate amino acid residues except L-proline. The chain is Pyrrolidone-carboxylate peptidase from Clostridium botulinum (strain Alaska E43 / Type E3).